Here is a 240-residue protein sequence, read N- to C-terminus: Ribosomal RNA small subunit methyltransferase G (240 aa).

Residues glycine 80, phenylalanine 85, 103–105, 131–132, and arginine 150 each bind S-adenosyl-L-methionine; these read DSS and AE.

The protein belongs to the methyltransferase superfamily. RNA methyltransferase RsmG family.

Its subcellular location is the cytoplasm. Functionally, specifically methylates the N7 position of a guanine in 16S rRNA. This is Ribosomal RNA small subunit methyltransferase G from Thermoanaerobacter pseudethanolicus (strain ATCC 33223 / 39E) (Clostridium thermohydrosulfuricum).